A 46-amino-acid polypeptide reads, in one-letter code: MTGKNWILISTTTPKSLEDEIVGRLLKILFVIFVDLISIIYVVITS.

At 1–21 the chain is on the cytoplasmic side; it reads MTGKNWILISTTTPKSLEDEI. The helical transmembrane segment at 22–42 threads the bilayer; the sequence is VGRLLKILFVIFVDLISIIYV. The Lumenal segment spans residues 43-46; that stretch reads VITS.

Homooligomer. Monomer. Interacts with ATP2A1/SERCA1. Interacts as a monomer with ATP2A2/SERCA2; the interaction inhibits ATP2A2 activity.

It is found in the sarcoplasmic reticulum membrane. Functionally, inhibits the activity of ATP2A1/SERCA1 ATPase in sarcoplasmic reticulum by decreasing the apparent affinity of the ATPase for Ca(2+), thereby acting as a key regulator of skeletal muscle activity. Its high expression in adult skeletal muscle, suggests that it constitutes the predominant regulator of ATP2A1/SERCA1 in adult skeletal muscle. Also inhibits the activity of ATP2A2/SERCA2 and ATP2A3/SERCA3. This chain is Myoregulin, found in Homo sapiens (Human).